We begin with the raw amino-acid sequence, 418 residues long: 3-isopropylmalate dehydratase large subunit (418 aa).

[4Fe-4S] cluster-binding residues include Cys-298, Cys-358, and Cys-361.

The protein belongs to the aconitase/IPM isomerase family. LeuC type 2 subfamily. In terms of assembly, heterodimer of LeuC and LeuD. [4Fe-4S] cluster is required as a cofactor.

The catalysed reaction is (2R,3S)-3-isopropylmalate = (2S)-2-isopropylmalate. The protein operates within amino-acid biosynthesis; L-leucine biosynthesis; L-leucine from 3-methyl-2-oxobutanoate: step 2/4. Its function is as follows. Catalyzes the isomerization between 2-isopropylmalate and 3-isopropylmalate, via the formation of 2-isopropylmaleate. The sequence is that of 3-isopropylmalate dehydratase large subunit from Thermoanaerobacter sp. (strain X514).